The chain runs to 904 residues: Toll-like receptor 3 (904 aa).

A signal peptide spans 1–23 (MRQTLPCIYFWGGLLPFGMLCAS). In terms of domain architecture, LRRNT spans 24–51 (STTKCTVSHEVADCSHLKLTQVPDDLPT). Over 24 to 704 (STTKCTVSHE…SCKDSAPFEL (681 aa)) the chain is Lumenal. An intrachain disulfide couples Cys28 to Cys37. 3 N-linked (GlcNAc...) asparagine glycosylation sites follow: Asn52, Asn57, and Asn70. 6 LRR repeats span residues 52 to 73 (NITV…NFTR), 76 to 97 (QLTS…LCQK), 100 to 121 (MLKV…TFAF), 124 to 145 (NLTE…PFVK), 148 to 168 (NLIT…GTQV), and 172 to 193 (NLQE…ELDI). An intrachain disulfide couples Cys95 to Cys122. Asn124 is a glycosylation site (N-linked (GlcNAc...) asparagine). N-linked (GlcNAc...) asparagine glycosylation occurs at Asn196. 2 LRR repeats span residues 198–219 (SLKK…CFHA) and 222–244 (RLFG…LCLE). Residues Asn247, Asn252, Asn265, Asn275, and Asn291 are each glycosylated (N-linked (GlcNAc...) asparagine). LRR repeat units lie at residues 249-270 (SIRN…TFLG), 275-296 (NLTM…SFAW), 299-320 (QLEY…SLHG), 323-344 (NVRY…ASLP), 356-377 (CLEH…MFTG), 380-400 (NLKY…TNET), 408-429 (PLHI…AFSW), 432-454 (HLEV…EWRG), 465-486 (YNKY…QRLM), 507-528 (NLTI…MLEG), 531-552 (KLEI…ANPG), 563-584 (HLHI…VFKD), 587-608 (ELKI…VFNN), and 611-632 (SLKS…VFGP). Residues Asn398 and Asn413 are each glycosylated (N-linked (GlcNAc...) asparagine). N-linked (GlcNAc...) asparagine glycosylation is present at Asn507. Asn636 and Asn662 each carry an N-linked (GlcNAc...) asparagine glycan. The region spanning 645-698 (NPFDCTCESIAWFVNWINETHTNIPELSSHYLCNTPPHYHGFPVRLFDTSSCKD) is the LRRCT domain. 2 disulfide bridges follow: Cys649–Cys677 and Cys651–Cys696. Residues 705-725 (FFMINTSILLIFIFIVLLIHF) form a helical membrane-spanning segment. Over 726–904 (EGWRISFYWN…VALGSKNSVH (179 aa)) the chain is Cytoplasmic. In terms of domain architecture, TIR spans 754-897 (FEYAAYIIHA…AFRHKLQVAL (144 aa)). Residue Tyr759 is modified to Phosphotyrosine. Residues Lys765, Lys812, and Lys831 each participate in a glycyl lysine isopeptide (Lys-Gly) (interchain with G-Cter in ubiquitin) cross-link. At Tyr858 the chain carries Phosphotyrosine.

Belongs to the Toll-like receptor family. As to quaternary structure, monomer and homodimer; dimerization is triggered by ligand-binding, the signaling unit is composed of one ds-RNA of around 40 bp and two TLR3 molecules, and lateral clustering of signaling units along the length of the ds-RNA ligand is required for TLR3 signal transduction. Interacts (via transmembrane domain) with UNC93B1; the interaction is required for transport from the ER to the endosomes. Interacts with SRC; upon binding of double-stranded RNA. Interacts with TICAM1 (via the TIR domain) in response to poly(I:C) and this interaction is enhanced in the presence of WDFY1. The tyrosine-phosphorylated form (via TIR domain) interacts with WDFY1 (via WD repeat 2) in response to poly(I:C). Heavily N-glycosylated, except on that part of the surface of the ectodomain that is involved in ligand binding. Post-translationally, TLR3 signaling requires a proteolytic cleavage mediated by cathepsins CTSB and CTSH, the cleavage occurs between amino acids 252 and 346. The cleaved form of TLR3 is the predominant form found in endosomes. In terms of processing, ubiquitinated by TRIM3; leading to recognition and sorting of polyubiquitinated TLR3 by the ESCRT complexes. Ubiquitinated by ZNRF1 via 'Lys-63'-linked ubiquitin chains; leading to TLR3 lysosomal trafficking and degradation. Ubiquitinated by RNF170 at Lys-765 via 'Lys-48'-linked ubiquitin chains; leading to TLR3 proteasomal degradation. As to expression, expressed at high level in placenta and pancreas. Also detected in CD11c+ immature dendritic cells. Only expressed in dendritic cells and not in other leukocytes, including monocyte precursors. TLR3 is the TLR that is expressed most strongly in the brain, especially in astrocytes, glia, and neurons.

It is found in the endoplasmic reticulum membrane. The protein resides in the endosome membrane. The protein localises to the early endosome. Key component of innate and adaptive immunity. TLRs (Toll-like receptors) control host immune response against pathogens through recognition of molecular patterns specific to microorganisms. TLR3 is a nucleotide-sensing TLR which is activated by double-stranded RNA, a sign of viral infection. Acts via the adapter TRIF/TICAM1, leading to NF-kappa-B activation, IRF3 nuclear translocation, cytokine secretion and the inflammatory response. This is Toll-like receptor 3 from Homo sapiens (Human).